We begin with the raw amino-acid sequence, 451 residues long: Serine--tRNA ligase, cytoplasmic (451 aa).

A disulfide bond links Cys213 and Cys244. Residue 238 to 240 (TAE) coordinates L-serine. ATP contacts are provided by residues 269–271 (RKE) and Val285. Glu292 is a binding site for L-serine. 358 to 361 (ELVS) is an ATP binding site. Thr396 contacts L-serine.

It belongs to the class-II aminoacyl-tRNA synthetase family. Type-1 seryl-tRNA synthetase subfamily. Homodimer. The tRNA molecule binds across the dimer.

The protein localises to the cytoplasm. The protein resides in the cytosol. It catalyses the reaction tRNA(Ser) + L-serine + ATP = L-seryl-tRNA(Ser) + AMP + diphosphate + H(+). Functionally, catalyzes the attachment of serine to tRNA(Ser) in a two-step reaction: serine is first activated by ATP to form Ser-AMP and then transferred to the acceptor end of tRNA(Ser). The polypeptide is Serine--tRNA ligase, cytoplasmic (Arabidopsis thaliana (Mouse-ear cress)).